The sequence spans 352 residues: 3-isopropylmalate dehydrogenase (352 aa).

An NAD(+)-binding site is contributed by 76–89 (GYKWENLPHDKKPE). Substrate contacts are provided by Arg-96, Arg-106, Arg-134, and Asp-220. Residues Asp-220, Asp-244, and Asp-248 each coordinate Mg(2+). Residue 277-289 (GSAPDIAGQNKAN) coordinates NAD(+).

The protein belongs to the isocitrate and isopropylmalate dehydrogenases family. LeuB type 1 subfamily. In terms of assembly, homodimer. Requires Mg(2+) as cofactor. Mn(2+) serves as cofactor.

Its subcellular location is the cytoplasm. The catalysed reaction is (2R,3S)-3-isopropylmalate + NAD(+) = 4-methyl-2-oxopentanoate + CO2 + NADH. The protein operates within amino-acid biosynthesis; L-leucine biosynthesis; L-leucine from 3-methyl-2-oxobutanoate: step 3/4. Functionally, catalyzes the oxidation of 3-carboxy-2-hydroxy-4-methylpentanoate (3-isopropylmalate) to 3-carboxy-4-methyl-2-oxopentanoate. The product decarboxylates to 4-methyl-2 oxopentanoate. This chain is 3-isopropylmalate dehydrogenase, found in Chlorobaculum tepidum (strain ATCC 49652 / DSM 12025 / NBRC 103806 / TLS) (Chlorobium tepidum).